A 351-amino-acid polypeptide reads, in one-letter code: Adenine deaminase (351 aa).

Zn(2+) is bound by residues histidine 20, histidine 22, and histidine 200. The active-site Proton donor is the glutamate 203. A Zn(2+)-binding site is contributed by aspartate 281. Aspartate 282 is a substrate binding site.

Belongs to the metallo-dependent hydrolases superfamily. Adenosine and AMP deaminases family. Adenine deaminase type 2 subfamily. The cofactor is Zn(2+).

The catalysed reaction is adenine + H2O + H(+) = hypoxanthine + NH4(+). Functionally, catalyzes the hydrolytic deamination of adenine to hypoxanthine. Plays an important role in the purine salvage pathway and in nitrogen catabolism. This is Adenine deaminase from Cupriavidus necator (strain ATCC 17699 / DSM 428 / KCTC 22496 / NCIMB 10442 / H16 / Stanier 337) (Ralstonia eutropha).